The primary structure comprises 309 residues: Pantothenate kinase (309 aa).

An ATP-binding site is contributed by 92 to 99 (GSVAVGKT).

Belongs to the prokaryotic pantothenate kinase family.

It localises to the cytoplasm. It catalyses the reaction (R)-pantothenate + ATP = (R)-4'-phosphopantothenate + ADP + H(+). Its pathway is cofactor biosynthesis; coenzyme A biosynthesis; CoA from (R)-pantothenate: step 1/5. The sequence is that of Pantothenate kinase (coaA) from Lactiplantibacillus plantarum (strain ATCC BAA-793 / NCIMB 8826 / WCFS1) (Lactobacillus plantarum).